A 200-amino-acid chain; its full sequence is Endoribonuclease YbeY (200 aa).

3 residues coordinate Zn(2+): His120, His124, and His130.

Belongs to the endoribonuclease YbeY family. It depends on Zn(2+) as a cofactor.

It is found in the cytoplasm. Its function is as follows. Single strand-specific metallo-endoribonuclease involved in late-stage 70S ribosome quality control and in maturation of the 3' terminus of the 16S rRNA. The sequence is that of Endoribonuclease YbeY from Corynebacterium efficiens (strain DSM 44549 / YS-314 / AJ 12310 / JCM 11189 / NBRC 100395).